The chain runs to 270 residues: Indole-3-glycerol phosphate synthase (270 aa).

Belongs to the TrpC family.

The catalysed reaction is 1-(2-carboxyphenylamino)-1-deoxy-D-ribulose 5-phosphate + H(+) = (1S,2R)-1-C-(indol-3-yl)glycerol 3-phosphate + CO2 + H2O. Its pathway is amino-acid biosynthesis; L-tryptophan biosynthesis; L-tryptophan from chorismate: step 4/5. In Beutenbergia cavernae (strain ATCC BAA-8 / DSM 12333 / CCUG 43141 / JCM 11478 / NBRC 16432 / NCIMB 13614 / HKI 0122), this protein is Indole-3-glycerol phosphate synthase.